The primary structure comprises 125 residues: Small ribosomal subunit protein uS13 (125 aa).

Residues 97–125 are disordered; it reads PLRGQRTKTNARTRKGKRKTVANKKMASK.

The protein belongs to the universal ribosomal protein uS13 family. Part of the 30S ribosomal subunit. Forms a loose heterodimer with protein S19. Forms two bridges to the 50S subunit in the 70S ribosome.

Located at the top of the head of the 30S subunit, it contacts several helices of the 16S rRNA. In the 70S ribosome it contacts the 23S rRNA (bridge B1a) and protein L5 of the 50S subunit (bridge B1b), connecting the 2 subunits; these bridges are implicated in subunit movement. Contacts the tRNAs in the A and P-sites. The protein is Small ribosomal subunit protein uS13 of Borrelia hermsii (strain HS1 / DAH).